Reading from the N-terminus, the 161-residue chain is Endoribonuclease YbeY (161 aa).

Zn(2+)-binding residues include histidine 121, histidine 125, and histidine 131.

The protein belongs to the endoribonuclease YbeY family. Requires Zn(2+) as cofactor.

The protein localises to the cytoplasm. Single strand-specific metallo-endoribonuclease involved in late-stage 70S ribosome quality control and in maturation of the 3' terminus of the 16S rRNA. The polypeptide is Endoribonuclease YbeY (Xylella fastidiosa (strain 9a5c)).